The sequence spans 728 residues: Catalase-peroxidase 1 (728 aa).

The tryptophyl-tyrosyl-methioninium (Trp-Tyr) (with M-244) cross-link spans 91 to 218; the sequence is WHSAGTYRIA…LAAVQMGLIY (128 aa). The Proton acceptor role is filled by His-92. A cross-link (tryptophyl-tyrosyl-methioninium (Tyr-Met) (with W-91)) is located at residues 218 to 244; it reads YVNPEGPDGNPDPVAAARDIRDTFARM. His-259 is a heme b binding site.

This sequence belongs to the peroxidase family. Peroxidase/catalase subfamily. In terms of assembly, homodimer or homotetramer. Requires heme b as cofactor. In terms of processing, formation of the three residue Trp-Tyr-Met cross-link is important for the catalase, but not the peroxidase activity of the enzyme.

The enzyme catalyses H2O2 + AH2 = A + 2 H2O. It catalyses the reaction 2 H2O2 = O2 + 2 H2O. Functionally, bifunctional enzyme with both catalase and broad-spectrum peroxidase activity. The polypeptide is Catalase-peroxidase 1 (Burkholderia ambifaria (strain ATCC BAA-244 / DSM 16087 / CCUG 44356 / LMG 19182 / AMMD) (Burkholderia cepacia (strain AMMD))).